We begin with the raw amino-acid sequence, 467 residues long: Fumarate hydratase class II (467 aa).

Residues serine 98–threonine 100, arginine 126, histidine 129–aspartate 132, serine 139–asparagine 141, and threonine 187 each bind substrate. Histidine 188 serves as the catalytic Proton donor/acceptor. The active site involves serine 318. Substrate is bound by residues serine 319 and lysine 324–asparagine 326.

Belongs to the class-II fumarase/aspartase family. Fumarase subfamily. As to quaternary structure, homotetramer.

The protein localises to the cytoplasm. It catalyses the reaction (S)-malate = fumarate + H2O. The protein operates within carbohydrate metabolism; tricarboxylic acid cycle; (S)-malate from fumarate: step 1/1. Functionally, involved in the TCA cycle. Catalyzes the stereospecific interconversion of fumarate to L-malate. In Salmonella typhimurium (strain LT2 / SGSC1412 / ATCC 700720), this protein is Fumarate hydratase class II.